Reading from the N-terminus, the 199-residue chain is uncharacterized protein (199 aa).

Residues 21 to 38 (ISPSATNFIVSLVIMILI) form a helical membrane-spanning segment.

The protein resides in the membrane. This is an uncharacterized protein from Saccharomyces cerevisiae (strain ATCC 204508 / S288c) (Baker's yeast).